Consider the following 604-residue polypeptide: MARISFSYLCPASWYFTVPTVSPFLRQRVAFLGLFFISCLLLLMLIIDFRHWSASLPRDRQYERYLARVGELEATDTEDPNLNYGLVVDCGSSGSRIFVYFWPRHNGNPHDLLDIKQMRDRNSQPVVKKIKPGISAMADTPEHASDYLRPLLSFAAAHVPVKKHKETPLYILCTAGMRLLPERKQLAILADLVKDLPLEFDFLFSQSQAEVISGKQEGVYAWIGINFVLGRFDHEDESDAEATQELAAGRRRTVGILDMGGASLQIAYEVPTSTSVLPAKQEEAAKILLAEFNLGCDVQHTEHVYRVYVTTFLGFGGNFARQRYEDLVLNETLNKNRLLGQKTGLSPDNPFLDPCLPVGLTDVVERNSQVLHVRGRGDWVSCGAMLSPLLARSNTSQASLNGIYQSPIDFNNSEFYGFSEFFYCTEDVLRIGGRYHGPTFAKAAQDYCGMAWSVLTQRFKNGLFSSHADEHRLKYQCFKSAWMYQVLHEGFHFPYDYPNLRTAQLVYDREVQWTLGAILYKTRFLPLRDLRQEGVRQAHGSWFRLSFVYNHYLFFACILVVLLAIFLYLLRLRRIHHRQTRASAPLDLLWLEEVVPMMGVQVGP.

Topologically, residues 1–28 are cytoplasmic; the sequence is MARISFSYLCPASWYFTVPTVSPFLRQR. The helical transmembrane segment at 29–49 threads the bilayer; the sequence is VAFLGLFFISCLLLLMLIIDF. Topologically, residues 50–546 are vesicular; it reads RHWSASLPRD…QAHGSWFRLS (497 aa). Catalysis depends on glutamate 217, which acts as the Proton acceptor. An N-linked (GlcNAc...) asparagine glycan is attached at asparagine 330. A disulfide bond links cysteine 448 and cysteine 477. Residues 547-567 form a helical membrane-spanning segment; sequence FVYNHYLFFACILVVLLAIFL. Residues 568–604 are Cytoplasmic-facing; it reads YLLRLRRIHHRQTRASAPLDLLWLEEVVPMMGVQVGP.

It belongs to the GDA1/CD39 NTPase family. Requires Ca(2+) as cofactor. Mg(2+) is required as a cofactor.

Its subcellular location is the cytoplasmic vesicle membrane. It carries out the reaction a ribonucleoside 5'-triphosphate + H2O = a ribonucleoside 5'-diphosphate + phosphate + H(+). The enzyme catalyses UTP + H2O = UDP + phosphate + H(+). It catalyses the reaction GTP + H2O = GDP + phosphate + H(+). The catalysed reaction is CTP + H2O = CDP + phosphate + H(+). Functionally, catalyzes the hydrolysis of nucleoside triphosphates and diphosphates in a calcium- or magnesium-dependent manner. Preferentially hydrolyzes nucleoside 5'-triphosphates, with substrate preference for UTP &gt; GTP &gt; CTP. Hydrolyzes ATP and nucleoside diphosphates only to a minor extent. The sequence is that of Ectonucleoside triphosphate diphosphohydrolase 7 (ENTPD7) from Homo sapiens (Human).